The sequence spans 82 residues: Putative membrane protein insertion efficiency factor (82 aa).

It belongs to the UPF0161 family.

It localises to the cell membrane. Functionally, could be involved in insertion of integral membrane proteins into the membrane. The protein is Putative membrane protein insertion efficiency factor of Streptococcus thermophilus (strain ATCC BAA-491 / LMD-9).